The chain runs to 282 residues: sn-glycerol-3-phosphate transport system permease protein UgpE (282 aa).

A run of 6 helical transmembrane segments spans residues 14–34, 86–106, 112–132, 146–168, 201–221, and 248–268; these read LILILGIIIVAFPIYYTFVAS, MAIAVGKIIISFMSAFAIVFF, MFFFWMIFITLMLPVEVRILP, YAGLTLPLMASATATFLFRQFFL, IAALFVILFIYGWTQYLWPLL, and WNYVMVTAILAIIPLILVVVL. The region spanning 78–269 is the ABC transmembrane type-1 domain; sequence LWNSFVVAMA…IPLILVVVLM (192 aa).

The protein belongs to the binding-protein-dependent transport system permease family. The complex is composed of two ATP-binding proteins (UgpC), two transmembrane proteins (UgpA and UgpE) and a solute-binding protein (UgpB).

The protein resides in the cell inner membrane. In terms of biological role, part of the ABC transporter complex UgpBAEC involved in sn-glycerol-3-phosphate (G3P) import. Probably responsible for the translocation of the substrate across the membrane. This Brucella abortus (strain 2308) protein is sn-glycerol-3-phosphate transport system permease protein UgpE (ugpE).